A 176-amino-acid chain; its full sequence is 2-C-methyl-D-erythritol 2,4-cyclodiphosphate synthase (176 aa).

Residues Asp-23, His-25, and His-60 each contribute to the a divalent metal cation site. A 4-CDP-2-C-methyl-D-erythritol 2-phosphate-binding site is contributed by 23-25 (DSH). 149–152 (TSGE) serves as a coordination point for 4-CDP-2-C-methyl-D-erythritol 2-phosphate.

This sequence belongs to the IspF family. Homotrimer. Requires a divalent metal cation as cofactor.

The enzyme catalyses 4-CDP-2-C-methyl-D-erythritol 2-phosphate = 2-C-methyl-D-erythritol 2,4-cyclic diphosphate + CMP. Its pathway is isoprenoid biosynthesis; isopentenyl diphosphate biosynthesis via DXP pathway; isopentenyl diphosphate from 1-deoxy-D-xylulose 5-phosphate: step 4/6. In terms of biological role, involved in the biosynthesis of isopentenyl diphosphate (IPP) and dimethylallyl diphosphate (DMAPP), two major building blocks of isoprenoid compounds. Catalyzes the conversion of 4-diphosphocytidyl-2-C-methyl-D-erythritol 2-phosphate (CDP-ME2P) to 2-C-methyl-D-erythritol 2,4-cyclodiphosphate (ME-CPP) with a corresponding release of cytidine 5-monophosphate (CMP). The chain is 2-C-methyl-D-erythritol 2,4-cyclodiphosphate synthase from Chlamydia abortus (strain DSM 27085 / S26/3) (Chlamydophila abortus).